A 103-amino-acid chain; its full sequence is Sec-independent protein translocase protein TatA (103 aa).

Residues 1–21 traverse the membrane as a helical segment; that stretch reads MGNIFSPTHLIVILLIVLVLF. Residues 60–103 are disordered; it reads YSKTTDVRPQQSQPLSVKRAAERRKGSSSFKEGKASVAKKQRGK.

The protein belongs to the TatA/E family. In terms of assembly, the Tat system comprises two distinct complexes: a TatABC complex, containing multiple copies of TatA, TatB and TatC subunits, and a separate TatA complex, containing only TatA subunits. Substrates initially bind to the TatABC complex, which probably triggers association of the separate TatA complex to form the active translocon.

Its subcellular location is the cell inner membrane. Functionally, part of the twin-arginine translocation (Tat) system that transports large folded proteins containing a characteristic twin-arginine motif in their signal peptide across membranes. TatA could form the protein-conducting channel of the Tat system. The sequence is that of Sec-independent protein translocase protein TatA from Bartonella quintana (strain Toulouse) (Rochalimaea quintana).